Reading from the N-terminus, the 254-residue chain is Tryptophan synthase alpha chain (254 aa).

Residues glutamate 48 and aspartate 59 each act as proton acceptor in the active site.

This sequence belongs to the TrpA family. Tetramer of two alpha and two beta chains.

It carries out the reaction (1S,2R)-1-C-(indol-3-yl)glycerol 3-phosphate + L-serine = D-glyceraldehyde 3-phosphate + L-tryptophan + H2O. It functions in the pathway amino-acid biosynthesis; L-tryptophan biosynthesis; L-tryptophan from chorismate: step 5/5. The alpha subunit is responsible for the aldol cleavage of indoleglycerol phosphate to indole and glyceraldehyde 3-phosphate. The polypeptide is Tryptophan synthase alpha chain (Desulfotalea psychrophila (strain LSv54 / DSM 12343)).